A 1370-amino-acid polypeptide reads, in one-letter code: Putative Polycomb group protein ASXL2 (1370 aa).

The HTH HARE-type domain maps to 11-86; it reads RTWAEAAKTV…RMGVYTLKKD (76 aa). The disordered stretch occupies residues 92 to 216; that stretch reads KELSECSEES…DSVPAKPGQM (125 aa). Residues 103 to 120 show a composition bias toward low complexity; the sequence is DGQSDSHSSDNSSSSDGG. The segment covering 141 to 152 has biased composition (pro residues); sequence PPSPPSGCPSPT. Phosphoserine is present on Ser-150. The Nuclear localization signal signature appears at 178–182; sequence QQKKK. Residues 186 to 198 show a composition bias toward polar residues; it reads CRPSMSISNQHLS. Positions 229–338 constitute a DEUBAD domain; the sequence is PDSILVNTNL…FENYYGQSSG (110 aa). The short motif at 258 to 262 is the LXXLL motif element; that stretch reads LLLLL. 2 disordered regions span residues 340–487 and 516–535; these read SLED…AGLQ and QESLKRKSSLTDEEATSSWE. The span at 398–412 shows a compositional bias: basic and acidic residues; sequence QKEENQDEARPDSKS. 4 positions are modified to phosphoserine: Ser-477, Ser-524, Ser-553, and Ser-590. Asymmetric dimethylarginine is present on Arg-594. Ser-601 carries the post-translational modification Phosphoserine. Residues 643 to 652 are compositionally biased toward gly residues; it reads IPGPGPGGGQ. 3 disordered regions span residues 643 to 734, 805 to 891, and 1103 to 1175; these read IPGP…LASS, PKAG…SSIP, and GHAD…VSEQ. 2 stretches are compositionally biased toward polar residues: residues 719-734 and 830-839; these read AQLQQTSSVPTGLASS and MTSSPVTTAS. A compositionally biased stretch (low complexity) spans 849-870; the sequence is SGTATSTGSAPSSSTLPAASSL. The segment covering 871-891 has biased composition (polar residues); it reads KTPGTSANMNGPISRTSSSIP. Residues 1119 to 1131 are compositionally biased toward acidic residues; sequence DESDEDRVGDEQE. Residues Ser-1121 and Ser-1254 each carry the phosphoserine modification. Residues 1332–1369 form a PHD-type; atypical zinc finger; it reads PSKCYCRLKAMIMCKGCGAFCHDDCIGPSKLCVSCLVV.

Belongs to the Asx family. Core component of the polycomb repressive deubiquitinase (PR-DUB) complex, at least composed of BAP1, one of ASXL1, ASXL2 or (probably) ASXL3, and one of MBD5 or MBD6. Distinct combinations of ASXL and MBD proteins may preferentially bind specific histone modification marks. The PR-DUB core associates with a number of accessory proteins, including FOXK1, FOXK2, KDM1B, HCFC1 and OGT; KDM1B specifically associates with ASXL2 PR-DUB complexes. Interacts (via PHD domain) with MBD5 and MBD6 (via MBD domain); the interaction is probably direct and mediates association of MBD proteins with the PR-DUB core. Interacts with PPARA and PPARG.

It localises to the nucleus. Its function is as follows. Putative Polycomb group (PcG) protein. PcG proteins act by forming multiprotein complexes, which are required to maintain the transcriptionally repressive state of homeotic genes throughout development. PcG proteins are not required to initiate repression, but to maintain it during later stages of development. They probably act via methylation of histones, rendering chromatin heritably changed in its expressibility. Involved in transcriptional regulation mediated by ligand-bound nuclear hormone receptors, such as peroxisome proliferator-activated receptor gamma (PPARG). Acts as a coactivator for PPARG and enhances its adipocyte differentiation-inducing activity; the function seems to involve differential recruitment of acetylated and methylated histone H3. Non-catalytic component of the PR-DUB complex, a complex that specifically mediates deubiquitination of histone H2A monoubiquitinated at 'Lys-119' (H2AK119ub1). The PR-DUB complex is an epigenetic regulator of gene expression and acts as a transcriptional coactivator, affecting genes involved in development, cell communication, signaling, cell proliferation and cell viability. ASXL1, ASXL2 and ASXL3 function redundantly in the PR-DUB complex. The ASXL proteins are essential for chromatin recruitment and transcriptional activation of associated genes. ASXL1 and ASXL2 are important for BAP1 protein stability. This chain is Putative Polycomb group protein ASXL2 (Asxl2), found in Mus musculus (Mouse).